The following is a 362-amino-acid chain: sn-glycerol-3-phosphate import ATP-binding protein UgpC (362 aa).

The region spanning 4–235 is the ABC transporter domain; that stretch reads LKLQAVTKSY…PATLFVASFI (232 aa). An ATP-binding site is contributed by 37-44; that stretch reads GPSGCGKS.

This sequence belongs to the ABC transporter superfamily. sn-glycerol-3-phosphate importer (TC 3.A.1.1.3) family. The complex is composed of two ATP-binding proteins (UgpC), two transmembrane proteins (UgpA and UgpE) and a solute-binding protein (UgpB).

Its subcellular location is the cell inner membrane. It carries out the reaction sn-glycerol 3-phosphate(out) + ATP + H2O = sn-glycerol 3-phosphate(in) + ADP + phosphate + H(+). Part of the ABC transporter complex UgpBAEC involved in sn-glycerol-3-phosphate (G3P) import. Responsible for energy coupling to the transport system. The sequence is that of sn-glycerol-3-phosphate import ATP-binding protein UgpC from Yersinia enterocolitica serotype O:8 / biotype 1B (strain NCTC 13174 / 8081).